The chain runs to 349 residues: Putative F-box/LRR-repeat protein At3g16555 (349 aa).

The region spanning Met-1–Ala-48 is the F-box domain. The stretch at Val-267–Ile-290 is one LRR repeat.

This chain is Putative F-box/LRR-repeat protein At3g16555, found in Arabidopsis thaliana (Mouse-ear cress).